Here is a 74-residue protein sequence, read N- to C-terminus: Hadrucalcin (74 aa).

The N-terminal stretch at 1-27 (MKTSSLTIIFIAVIITIICLNIHDIEA) is a signal peptide. Positions 28–39 (REIEFNAGRVVR) are excised as a propeptide. 3 cysteine pairs are disulfide-bonded: Cys-44-Cys-58, Cys-51-Cys-62, and Cys-57-Cys-73. Positions 64–65 (RR) are essential for stimulation of [3H]ryanodine binding to RYR1.

In terms of tissue distribution, expressed by the venom gland.

It localises to the secreted. In terms of biological role, this toxin activates ryanodine receptors RyR1 and RyR2 by inducing a long-lasting subconductance state (35% of the full conductance stateon RyR1). Furthermore, it triggers calcium release from sarcoplasmic vesicles (11.8 nM are enough to induce a sharp release on RyR1, and 55% of the total calcium is released after toxin (100 nM) addition on RyR1) probably by acting as a cell-penetrating peptide (CPP). In addition, it has been shown to dose-dependently stimulate ryanodine binding to RyR1 (EC(50)=14.8 nM). It also augments the bell-shaped calcium-[3H]ryanodine binding curve that is maximal at about 10 uM calcium concentration. It binds a different site as ryanodine. It acts synergistically with caffeine. In vivo, intracerebroventricular injection into mice induces neurotoxic symptoms, followed by death. The protein is Hadrucalcin of Hoffmannihadrurus gertschi (Scorpion).